A 284-amino-acid polypeptide reads, in one-letter code: 4-hydroxy-3-methylbut-2-enyl diphosphate reductase (284 aa).

Cysteine 12 serves as a coordination point for [4Fe-4S] cluster. (2E)-4-hydroxy-3-methylbut-2-enyl diphosphate-binding residues include histidine 40 and histidine 72. 2 residues coordinate dimethylallyl diphosphate: histidine 40 and histidine 72. Isopentenyl diphosphate contacts are provided by histidine 40 and histidine 72. Cysteine 94 contacts [4Fe-4S] cluster. (2E)-4-hydroxy-3-methylbut-2-enyl diphosphate is bound at residue histidine 122. Histidine 122 serves as a coordination point for dimethylallyl diphosphate. Isopentenyl diphosphate is bound at residue histidine 122. The active-site Proton donor is the glutamate 124. Position 161 (threonine 161) interacts with (2E)-4-hydroxy-3-methylbut-2-enyl diphosphate. Cysteine 193 is a binding site for [4Fe-4S] cluster. (2E)-4-hydroxy-3-methylbut-2-enyl diphosphate contacts are provided by serine 221, asparagine 223, and serine 264. Serine 221, asparagine 223, and serine 264 together coordinate dimethylallyl diphosphate. 3 residues coordinate isopentenyl diphosphate: serine 221, asparagine 223, and serine 264.

The protein belongs to the IspH family. [4Fe-4S] cluster serves as cofactor.

It carries out the reaction isopentenyl diphosphate + 2 oxidized [2Fe-2S]-[ferredoxin] + H2O = (2E)-4-hydroxy-3-methylbut-2-enyl diphosphate + 2 reduced [2Fe-2S]-[ferredoxin] + 2 H(+). It catalyses the reaction dimethylallyl diphosphate + 2 oxidized [2Fe-2S]-[ferredoxin] + H2O = (2E)-4-hydroxy-3-methylbut-2-enyl diphosphate + 2 reduced [2Fe-2S]-[ferredoxin] + 2 H(+). It functions in the pathway isoprenoid biosynthesis; dimethylallyl diphosphate biosynthesis; dimethylallyl diphosphate from (2E)-4-hydroxy-3-methylbutenyl diphosphate: step 1/1. Its pathway is isoprenoid biosynthesis; isopentenyl diphosphate biosynthesis via DXP pathway; isopentenyl diphosphate from 1-deoxy-D-xylulose 5-phosphate: step 6/6. Its function is as follows. Catalyzes the conversion of 1-hydroxy-2-methyl-2-(E)-butenyl 4-diphosphate (HMBPP) into a mixture of isopentenyl diphosphate (IPP) and dimethylallyl diphosphate (DMAPP). Acts in the terminal step of the DOXP/MEP pathway for isoprenoid precursor biosynthesis. In Dehalococcoides mccartyi (strain ATCC BAA-2266 / KCTC 15142 / 195) (Dehalococcoides ethenogenes (strain 195)), this protein is 4-hydroxy-3-methylbut-2-enyl diphosphate reductase.